Here is a 140-residue protein sequence, read N- to C-terminus: Nucleoside diphosphate kinase (140 aa).

Positions 11, 59, 87, 93, 104, and 114 each coordinate ATP. His117 functions as the Pros-phosphohistidine intermediate in the catalytic mechanism.

The protein belongs to the NDK family. In terms of assembly, homotetramer. It depends on Mg(2+) as a cofactor.

The protein resides in the cytoplasm. The enzyme catalyses a 2'-deoxyribonucleoside 5'-diphosphate + ATP = a 2'-deoxyribonucleoside 5'-triphosphate + ADP. It catalyses the reaction a ribonucleoside 5'-diphosphate + ATP = a ribonucleoside 5'-triphosphate + ADP. In terms of biological role, major role in the synthesis of nucleoside triphosphates other than ATP. The ATP gamma phosphate is transferred to the NDP beta phosphate via a ping-pong mechanism, using a phosphorylated active-site intermediate. This Rhodopseudomonas palustris (strain BisB18) protein is Nucleoside diphosphate kinase.